A 1333-amino-acid polypeptide reads, in one-letter code: snRNA-activating protein complex subunit 4 (1333 aa).

A disordered region spans residues 29–84 (HFEVSESSLSSDSEADSLPDEDLETAGAPILEEEGSSESSNDEEDPKDKALPEDPE). Composition is skewed to acidic residues over residues 41–52 (SEADSLPDEDLE) and 59–73 (LEEE…DEED). The residue at position 68 (serine 68) is a Phosphoserine. An SNAPC5-binding region spans residues 84 to 133 (ETCLQLNMVYQEVIREKLAEVSQLLAQNQEQQEEILFDLSGTKCPKVKDG). The Myb-like 1 domain occupies 250-288 (EEALLGNRLDSHDWEKISNINFEGARSAEEIRKFWQSSE). In terms of domain architecture, HTH myb-type 1 spans 289–343 (HPSISKQEWSTEEVERLKAIAATHGHLEWHLVAEELGTSRSAFQCLQKFQQYNKT). The segment at residues 317-341 (WHLVAEELGTSRSAFQCLQKFQQYN) is a DNA-binding region (H-T-H motif). The region spanning 344-395 (LKRKEWTEEEDHMLTQLVQEMRVGNHIPYRKIVYFMEGRDSMQLIYRWTKSL) is the Myb-like 2 domain. 2 HTH myb-type domains span residues 396-451 (DPSL…HFSL) and 452-503 (KKGR…RKKQ). 2 consecutive DNA-binding regions (H-T-H motif) follow at residues 424–447 (WFKI…IRRL) and 476–499 (WARI…KILA). Residues 503 to 515 (QHLQRKRGQRPRH) are compositionally biased toward basic residues. Disordered regions lie at residues 503 to 558 (QHLQ…LEKS), 662 to 702 (LMKE…QNKQ), 811 to 842 (NAKN…LGSC), and 1079 to 1117 (LPSP…PEKA). A compositionally biased stretch (low complexity) spans 516 to 546 (SSQWSSSGSSSSSSEDYGSSSGSDGSSGSEN). 2 stretches are compositionally biased toward polar residues: residues 672 to 686 (LPSS…NNTA) and 811 to 826 (NAKN…TGEQ). The segment at 1131-1247 (AIVTWLKGCQ…NSIPTTLSPD (117 aa)) is SNAPC2-binding. Phosphoserine is present on residues serine 1252, serine 1254, serine 1301, and serine 1309. The tract at residues 1282 to 1333 (PAAPDPVQSHLVSPGQRAPSPGEVSAPSPLDASDGLDDLNVLRTRRARHSRR) is disordered. The segment covering 1324–1333 (RTRRARHSRR) has biased composition (basic residues).

Part of the SNAPc composed of 5 subunits: SNAPC1, SNAPC2, SNAPC3, SNAPC4 and SNAPC5. SNAPC4 interacts with SNAPC1, SNAPC2, SNAPC5, BRF2 and TBP.

It is found in the nucleus. In terms of biological role, part of the SNAPc complex required for the transcription of both RNA polymerase II and III small-nuclear RNA genes. Binds to the proximal sequence element (PSE), a non-TATA-box basal promoter element common to these 2 types of genes. Recruits TBP and BRF2 to the U6 snRNA TATA box. The chain is snRNA-activating protein complex subunit 4 from Mus musculus (Mouse).